Reading from the N-terminus, the 201-residue chain is 3-isopropylmalate dehydratase small subunit (201 aa).

It belongs to the LeuD family. LeuD type 1 subfamily. Heterodimer of LeuC and LeuD.

The enzyme catalyses (2R,3S)-3-isopropylmalate = (2S)-2-isopropylmalate. It participates in amino-acid biosynthesis; L-leucine biosynthesis; L-leucine from 3-methyl-2-oxobutanoate: step 2/4. Its function is as follows. Catalyzes the isomerization between 2-isopropylmalate and 3-isopropylmalate, via the formation of 2-isopropylmaleate. The protein is 3-isopropylmalate dehydratase small subunit of Shewanella frigidimarina (strain NCIMB 400).